A 361-amino-acid polypeptide reads, in one-letter code: Protein SSUH2 homolog (361 aa).

It is found in the cytoplasm. The protein localises to the nucleus. Functionally, plays a role in odontogenesis. This is Protein SSUH2 homolog from Danio rerio (Zebrafish).